We begin with the raw amino-acid sequence, 260 residues long: NAD-dependent protein deacetylase (260 aa).

The region spanning 9–260 (DDIDGETLDA…QVLPAIVERL (252 aa)) is the Deacetylase sirtuin-type domain. NAD(+) is bound by residues alanine 35, threonine 39, phenylalanine 46, arginine 47, glutamine 114, isoleucine 116, aspartate 117, and histidine 132. Phenylalanine 46 lines the nicotinamide pocket. 2 residues coordinate nicotinamide: isoleucine 116 and aspartate 117. Histidine 132 serves as the catalytic Proton acceptor. Positions 140, 143, 166, and 168 each coordinate Zn(2+). Residues serine 206, serine 207, asparagine 231, aspartate 248, and valine 249 each contribute to the NAD(+) site.

It belongs to the sirtuin family. Class U subfamily. Requires Zn(2+) as cofactor.

The protein localises to the cytoplasm. The enzyme catalyses N(6)-acetyl-L-lysyl-[protein] + NAD(+) + H2O = 2''-O-acetyl-ADP-D-ribose + nicotinamide + L-lysyl-[protein]. Its function is as follows. NAD-dependent protein deacetylase which modulates the activities of several enzymes which are inactive in their acetylated form. Deacetylates the N-terminal lysine residue of Alba, the major archaeal chromatin protein and that, in turn, increases Alba's DNA binding affinity, thereby repressing transcription. This is NAD-dependent protein deacetylase from Haloarcula marismortui (strain ATCC 43049 / DSM 3752 / JCM 8966 / VKM B-1809) (Halobacterium marismortui).